The primary structure comprises 275 residues: MSTGISTDLHVHFGALNFSKTYKSGLSNRTVSFSRVGYAQNRKLSCSVSNTENVAPKDDERGKDRPLVKMCGITSARDAAMAVEAGADFIGMIIWPHSKRSISLSVAKDISKVAREGGAKPVGVFVEDDDNTILRAADSSDLELVQLHGNGSRAAFSRLVRKRRVIYVLNANQDGKLLNEVPEEDCHLADWILVDSATGGSGHGFNWAQFKLPSVRSRNGWLLAGGINPTNVSEALSILQPDGIDVSSGICGTDGIQKDKSKISSFITAVRSVHY.

The N-terminal 32 residues, methionine 1–serine 32, are a transit peptide targeting the chloroplast.

It belongs to the TrpF family. In terms of tissue distribution, expressed in roots and shoots.

It is found in the plastid. The protein localises to the chloroplast. It catalyses the reaction N-(5-phospho-beta-D-ribosyl)anthranilate = 1-(2-carboxyphenylamino)-1-deoxy-D-ribulose 5-phosphate. The protein operates within amino-acid biosynthesis; L-tryptophan biosynthesis; L-tryptophan from chorismate: step 3/5. The chain is N-(5'-phosphoribosyl)anthranilate isomerase 2, chloroplastic (PAI2) from Arabidopsis thaliana (Mouse-ear cress).